A 570-amino-acid chain; its full sequence is Sulfite reductase [NADPH] hemoprotein beta-component (570 aa).

[4Fe-4S] cluster contacts are provided by Cys434, Cys440, Cys479, and Cys483. Position 483 (Cys483) interacts with siroheme.

It belongs to the nitrite and sulfite reductase 4Fe-4S domain family. Alpha(8)-beta(8). The alpha component is a flavoprotein, the beta component is a hemoprotein. The cofactor is siroheme. [4Fe-4S] cluster serves as cofactor.

The enzyme catalyses hydrogen sulfide + 3 NADP(+) + 3 H2O = sulfite + 3 NADPH + 4 H(+). It functions in the pathway sulfur metabolism; hydrogen sulfide biosynthesis; hydrogen sulfide from sulfite (NADPH route): step 1/1. Its function is as follows. Component of the sulfite reductase complex that catalyzes the 6-electron reduction of sulfite to sulfide. This is one of several activities required for the biosynthesis of L-cysteine from sulfate. The protein is Sulfite reductase [NADPH] hemoprotein beta-component of Escherichia coli O9:H4 (strain HS).